Reading from the N-terminus, the 2844-residue chain is Sodium channel protein 60E (2844 aa).

The Cytoplasmic segment spans residues 1–121; it reads MSDDQATFND…WSPARRVCVY (121 aa). The stretch at 107–434 is one I repeat; it reads FLFYPWSPAR…FDPSVLNVKK (328 aa). Residues 122–145 traverse the membrane as a helical segment; it reads IATNQFFDYCVMATILFNCIFLAM. The Extracellular portion of the chain corresponds to 146 to 151; sequence TETVEE. A helical transmembrane segment spans residues 152 to 172; that stretch reads AEYIFLAIYSIEMVIKIIAKG. At 173 to 183 the chain is on the cytoplasmic side; the sequence is FLLNKYTYLRN. Residues 184-202 form a helical membrane-spanning segment; sequence PWNWLDFVVITSGYATIGM. Residues 203–208 lie on the Extracellular side of the membrane; that stretch reads EVGNLA. The helical; Voltage-sensor transmembrane segment at 209–228 threads the bilayer; the sequence is GLRTFRVLRALKTVSIMPGL. Residues 229–244 are Cytoplasmic-facing; it reads KTIINALLHSFRQLAE. Residues 245 to 265 traverse the membrane as a helical segment; it reads VMTLTIFCLMVFALFALQVYM. The Extracellular portion of the chain corresponds to 266-340; it reads GELRNKCVRQ…PNHGYTNFDN (75 aa). A disulfide bridge connects residues cysteine 272 and cysteine 318. N-linked (GlcNAc...) asparagine glycans are attached at residues asparagine 282, asparagine 293, and asparagine 311. An intramembrane region (pore-forming) is located at residues 341–365; the sequence is FMWSMLTTFQLITLDYWENVYNMVL. Residues 366–374 lie on the Extracellular side of the membrane; the sequence is ATCGPMSVS. A helical membrane pass occupies residues 375–395; the sequence is FFTVVVFFGSFYLINLMLAVV. Residues 396–687 are Cytoplasmic-facing; sequence ALSYEEEAEI…QNCLYKVVRD (292 aa). The disordered stretch occupies residues 452–610; it reads ASYSKKKTRR…QDTTNDMGHV (159 aa). Residues 455–465 show a composition bias toward basic residues; that stretch reads SKKKTRRKKTK. A compositionally biased stretch (gly residues) spans 469–479; sequence EGGTNGNGNGS. Low complexity-rich tracts occupy residues 511-520 and 577-586; these read QAQKQYQQME and SSNSSGVNRE. Residues 593–603 are compositionally biased toward acidic residues; sequence GVVDDHEEQDT. An II repeat occupies 668-1130; it reads CTDYESWLQF…ESIELLGQYN (463 aa). The helical transmembrane segment at 688–708 threads the bilayer; sequence PLFELAITLCIVLNTAFLAME. The Extracellular portion of the chain corresponds to 709-718; that stretch reads HHGMSESFRN. Residues 719-743 form a helical membrane-spanning segment; that stretch reads ALDVGNKVFTSIFTFECIVKLMALS. At 744 to 749 the chain is on the cytoplasmic side; it reads KDFFLC. Residues 750-769 traverse the membrane as a helical segment; the sequence is GWNIFDLLIVTASLLDIIFE. Residues 770–775 are Extracellular-facing; the sequence is LVDGLS. A helical; Voltage-sensor membrane pass occupies residues 776–795; it reads VLRGLRLLRVLKLAQSWTTM. Over 796-810 the chain is Cytoplasmic; sequence KVLLSIIISTIGALG. Residues 811 to 832 traverse the membrane as a helical segment; the sequence is NLTLILVIVIYIFAVIGMQLFS. Residues 833 to 852 are Extracellular-facing; sequence KDYTPEKFDPDPVPRWNFND. The pore-forming intramembrane region spans 853-873; the sequence is FFHSFMMIFRILCGEWIEPLW. The Extracellular segment spans residues 874–889; that stretch reads DCMRAEEEQGASTCFA. Cysteines 875 and 887 form a disulfide. The chain crosses the membrane as a helical span at residues 890 to 910; sequence IFLPTLVMGNFMVLNLFLALL. Residues 911–1742 are Cytoplasmic-facing; that stretch reads LNSFNSEELK…SAKHWTRVRT (832 aa). Over residues 1129–1157 the composition is skewed to polar residues; it reads YNSTDTDPYANDQRSGCGSFNRGDSLQDN. Disordered regions lie at residues 1129–1166, 1185–1224, 1268–1288, 1577–1630, and 1635–1654; these read YNST…GSEE, YRKS…NSMS, ISNV…ENET, APTP…ADAS, and LAMA…ATQK. Positions 1191 to 1203 are enriched in low complexity; sequence RLSQSSGQSQRSL. The span at 1204 to 1213 shows a compositional bias: basic and acidic residues; sequence LKSEEAEMRR. 3 stretches are compositionally biased toward polar residues: residues 1277 to 1286, 1604 to 1618, and 1640 to 1654; these read PSSQMGQPEN, PQST…QSAR, and KTEQ…ATQK. An III repeat occupies 1723-2040; that stretch reads PWFMSCMDTQ…QKHYYTAMKK (318 aa). A helical transmembrane segment spans residues 1743–1763; that stretch reads AVLTVVDTPAFEWFVLVLIFA. Residues 1764-1789 are Extracellular-facing; it reads SSITLCFEDINLDKNKTLKRVLYWIN. Residues asparagine 1778 and asparagine 1789 are each glycosylated (N-linked (GlcNAc...) asparagine). Residues 1790–1810 traverse the membrane as a helical segment; the sequence is FSFCLIFVVEMILKWLALGFS. Topologically, residues 1811–1813 are cytoplasmic; the sequence is KYF. A helical transmembrane segment spans residues 1814 to 1834; sequence TSFWTILDFIIVFVSVFSLLI. Topologically, residues 1835–1839 are extracellular; it reads EENEN. The helical; Voltage-sensor transmembrane segment at 1840–1861 threads the bilayer; that stretch reads LKVLRSLRTLRALRPLRAISRW. Residues 1862–1880 lie on the Cytoplasmic side of the membrane; the sequence is QGMRIVVNALMYAIPSIFN. Residues 1881–1902 form a helical membrane-spanning segment; sequence VLLVCLVFWLIFSIMGVQFFGG. Residues 1903 to 1943 are Extracellular-facing; sequence KFFKCVNEMGELLPITEVNDKWDCIEQNYTWINSKITFDHV. N-linked (GlcNAc...) asparagine glycosylation occurs at asparagine 1930. Residues 1944-1965 constitute an intramembrane region (pore-forming); that stretch reads GMGYLALLQVATFEGWMEVMAD. Over 1966–1981 the chain is Extracellular; it reads AVDARGVDLQPQREAN. A helical transmembrane segment spans residues 1982-2002; that stretch reads LYAYIYFVIFIVCGSFFTLNL. Residues 2003 to 2069 lie on the Cytoplasmic side of the membrane; the sequence is FIGVIIDNFN…MFYDLSNSRR (67 aa). The stretch at 2050–2311 is one IV repeat; that stretch reads IKRPINHFLA…NMYIAIILEN (262 aa). The helical transmembrane segment at 2070-2090 threads the bilayer; that stretch reads FEIAIFVLIFLNMLTMGIEHY. Residues 2091-2095 are Extracellular-facing; sequence DQPHA. The chain crosses the membrane as a helical span at residues 2096-2116; sequence VFFILEVSNAFFTTVFGLEAI. Residues 2117–2132 are Cytoplasmic-facing; that stretch reads VKIVGLRYHYFTVPWN. The chain crosses the membrane as a helical span at residues 2133-2153; it reads VFDFLLVLASIFGILMEDIMI. Over 2154–2162 the chain is Extracellular; sequence DLPISPTLL. Residues 2163–2184 traverse the membrane as a helical; Voltage-sensor segment; the sequence is RVVRVFRIGRILRLIKAAKGIR. Over 2185 to 2199 the chain is Cytoplasmic; the sequence is KLLFALVVSLPALFN. A helical transmembrane segment spans residues 2200–2220; that stretch reads IGALLGLITFIYAILGMSLFG. Residues 2221–2236 are Extracellular-facing; sequence NVKLQGALDDMVNFQT. The segment at residues 2237 to 2259 is an intramembrane region (pore-forming); sequence FGRSMQLLFRLMTSAGWNDVLES. Topologically, residues 2260-2288 are extracellular; sequence LMIQPPDCDPFIHGHTNGNCGHPLLAITY. Residues 2289 to 2309 traverse the membrane as a helical segment; that stretch reads FTSFIIISYMIVINMYIAIIL. Topologically, residues 2310–2844 are cytoplasmic; the sequence is ENFNQAHQEE…QFESLPDRQR (535 aa). The IQ domain maps to 2441–2470; that stretch reads QEKAAKTIQTGWKEYLRRKREKERSNSGDS. Disordered stretches follow at residues 2457 to 2479, 2584 to 2668, 2780 to 2802, and 2818 to 2844; these read RRKR…SPGG, SLTS…LSAQ, DSPK…GAPI, and NPEK…DRQR. The segment covering 2467–2479 has biased composition (polar residues); that stretch reads SGDSATQTSSPGG. Positions 2595–2632 are enriched in low complexity; the sequence is AMNNTTNTTSNSASTSGTASSTATAPATGCGPAATSAS. Over residues 2647–2658 the composition is skewed to basic residues; sequence SRKRASSFIRKK. Polar residues predominate over residues 2825–2836; the sequence is DQGNGQDETAQF.

Belongs to the sodium channel (TC 1.A.1.10) family. NaCP60E subfamily. As to expression, in embryonic and larval stages, expression is limited to very few non-neuronal cells in either the CNS or PNS. In pupal and adult stages, expressed in cell bodies of the fly central nervous system, including optic lobes, central brain, subesophageal ganglion, thoracico-abdominal ganglion, major olfactory organs, the third antennal segment and the maxillary palps.

Its subcellular location is the cell membrane. Mediates the voltage-dependent sodium ion permeability of excitable membranes. Plays a role in processing of olfactory information during the olfactory avoidance response. This Drosophila melanogaster (Fruit fly) protein is Sodium channel protein 60E (NaCP60E).